Reading from the N-terminus, the 125-residue chain is SOSS complex subunit C homolog (125 aa).

A disordered region spans residues 43–77 (MPSPQLLGQPTVAPEFLPQGVGLPTNATPPRSAFN). Residues 67–77 (TNATPPRSAFN) are compositionally biased toward polar residues.

This sequence belongs to the SOSS-C family.

This is SOSS complex subunit C homolog from Drosophila persimilis (Fruit fly).